Here is a 788-residue protein sequence, read N- to C-terminus: Autophagy-related protein 9 (788 aa).

The Cytoplasmic portion of the chain corresponds to 1 to 171 (MTDKSTFLSV…EAYMYYTGKG (171 aa)). The span at 32–42 (ILRRVEEEHAQ) shows a compositional bias: basic and acidic residues. The disordered stretch occupies residues 32–127 (ILRRVEEEHA…TGVANGGLPR (96 aa)). Residues 44-58 (SDNSNSDNDSGNDSD) show a composition bias toward low complexity. Over residues 101–112 (SFAQGTKTQTPI) the composition is skewed to polar residues. The chain crosses the membrane as a helical span at residues 172 to 192 (LVSIILSRVLNMSTIMFVVVF). The Lumenal segment spans residues 193 to 222 (STYLGSCIDYSKIKGSRTLDEVHVKQCYAK). The helical transmembrane segment at 223–243 (LGSFHVFVLWTFFVLWFMKLF) threads the bilayer. The Cytoplasmic portion of the chain corresponds to 244–390 (QYVKDIRRLV…QILSTGLRRR (147 aa)). An intramembrane region is located at residue Phe391. At 392 to 479 (VFAAIMNVVF…PKEKTALVSK (88 aa)) the chain is on the cytoplasmic side. A helical membrane pass occupies residues 480 to 500 (FVSFIAGSFAAVLGIASLIDP). The Lumenal segment spans residues 501 to 512 (ELFLMFEISANR). The helical transmembrane segment at 513 to 533 (TVLFYIGVFGSILAVSRSLIP) threads the bilayer. At 534–579 (EETLVFDPEISLRYVAEFTHYLPPEWEGKLHTEQVKNEFSLMYEMR) the chain is on the cytoplasmic side. The stretch at 580–600 (LIILLKELASIFLAPFILYYS) is an intramembrane region. The Cytoplasmic segment spans residues 601 to 788 (LTQSCDDIVD…KKTDNMNLGA (188 aa)). The segment at 715–736 (LSPAAPTATTATSGTATGAAPR) is disordered. Positions 716-734 (SPAAPTATTATSGTATGAA) are enriched in low complexity.

It belongs to the ATG9 family. As to quaternary structure, homotrimer; forms a homotrimer with a central pore that forms a path between the two membrane leaflets. In terms of processing, phosphorylated by ATG1. ATG1 phosphorylation is required for preautophagosome elongation.

The protein resides in the preautophagosomal structure membrane. Its subcellular location is the cytoplasmic vesicle membrane. It localises to the golgi apparatus membrane. The protein localises to the endoplasmic reticulum membrane. It catalyses the reaction a 1,2-diacyl-sn-glycero-3-phosphocholine(in) = a 1,2-diacyl-sn-glycero-3-phosphocholine(out). The catalysed reaction is a 1,2-diacyl-sn-glycero-3-phospho-L-serine(in) = a 1,2-diacyl-sn-glycero-3-phospho-L-serine(out). The enzyme catalyses a 1,2-diacyl-sn-glycero-3-phosphoethanolamine(in) = a 1,2-diacyl-sn-glycero-3-phosphoethanolamine(out). It carries out the reaction a 1,2-diacyl-sn-glycero-3-phospho-(1D-myo-inositol-3-phosphate)(in) = a 1,2-diacyl-sn-glycero-3-phospho-(1D-myo-inositol-3-phosphate)(out). Its function is as follows. Phospholipid scramblase involved in autophagy and cytoplasm to vacuole transport (Cvt) vesicle formation. Cycles between the preautophagosomal structure/phagophore assembly site (PAS) and the cytoplasmic vesicle pool and supplies membrane for the growing autophagosome. Lipid scramblase activity plays a key role in preautophagosomal structure/phagophore assembly by distributing the phospholipids that arrive through ATG2 from the cytoplasmic to the luminal leaflet of the bilayer, thereby driving autophagosomal membrane expansion. Required for mitophagy. Also involved in endoplasmic reticulum-specific autophagic process and is essential for the survival of cells subjected to severe ER stress. Different machineries are required for anterograde trafficking to the PAS during either the Cvt pathway or bulk autophagy and for retrograde trafficking. This is Autophagy-related protein 9 from Yarrowia lipolytica (strain CLIB 122 / E 150) (Yeast).